The chain runs to 566 residues: Cytokine-like nuclear factor N-PAC (566 aa).

The region spanning 9 to 70 (VNDLVWAKMK…ETQIKPYLQF (62 aa)) is the PWWP domain. 2 disordered regions span residues 127 to 147 (VASG…NTTT) and 206 to 234 (MLDD…SSLD). Positions 274 to 566 (RNIKASQLKF…ASAVYVRARF (293 aa)) are dehydrogenase domain. NAD(+) is bound by residues 284–298 (GFLG…IVKN) and lysine 518.

Belongs to the HIBADH-related family. NP60 subfamily. As to quaternary structure, binds to mononucleosomes. Interacts with male-specific lethal (MSL) histone acetyltransferase complex at least composed of mof, msl-1, msl-2 and msl-3.

It is found in the chromosome. May have oxidoreductase activity. This Anopheles gambiae (African malaria mosquito) protein is Cytokine-like nuclear factor N-PAC.